We begin with the raw amino-acid sequence, 734 residues long: Photosystem I P700 chlorophyll a apoprotein A2 (734 aa).

8 helical membrane passes run 46-69 (IFAS…FHVA), 135-158 (LYTG…LHLQ), 175-199 (LNHH…HVAI), 273-291 (IAHH…GHMY), 330-353 (IHFQ…QHMY), 369-395 (AALY…IFFI), 417-439 (AIIS…LYVH), and 517-535 (FLVH…LILV). [4Fe-4S] cluster is bound by residues cysteine 559 and cysteine 568. 2 helical membrane-spanning segments follow: residues 575–596 (AFYL…YWHW) and 643–665 (LSVW…MFLI). Chlorophyll a is bound by residues histidine 654, methionine 662, and tyrosine 670. Tryptophan 671 provides a ligand contact to phylloquinone. The helical transmembrane segment at 707 to 727 (LVGLAHFSVGYIFTYAAFLIA) threads the bilayer.

The protein belongs to the PsaA/PsaB family. In terms of assembly, the PsaA/B heterodimer binds the P700 chlorophyll special pair and subsequent electron acceptors. PSI consists of a core antenna complex that captures photons, and an electron transfer chain that converts photonic excitation into a charge separation. The eukaryotic PSI reaction center is composed of at least 11 subunits. It depends on P700 is a chlorophyll a/chlorophyll a' dimer, A0 is one or more chlorophyll a, A1 is one or both phylloquinones and FX is a shared 4Fe-4S iron-sulfur center. as a cofactor.

It is found in the plastid. The protein localises to the chloroplast thylakoid membrane. It carries out the reaction reduced [plastocyanin] + hnu + oxidized [2Fe-2S]-[ferredoxin] = oxidized [plastocyanin] + reduced [2Fe-2S]-[ferredoxin]. Functionally, psaA and PsaB bind P700, the primary electron donor of photosystem I (PSI), as well as the electron acceptors A0, A1 and FX. PSI is a plastocyanin-ferredoxin oxidoreductase, converting photonic excitation into a charge separation, which transfers an electron from the donor P700 chlorophyll pair to the spectroscopically characterized acceptors A0, A1, FX, FA and FB in turn. Oxidized P700 is reduced on the lumenal side of the thylakoid membrane by plastocyanin. This is Photosystem I P700 chlorophyll a apoprotein A2 from Aethionema grandiflorum (Persian stone-cress).